A 197-amino-acid chain; its full sequence is Ribonuclease HII (197 aa).

Residues 11 to 197 (NLIAGVDEVG…FAPVRKILGL (187 aa)) enclose the RNase H type-2 domain. Residues aspartate 17, glutamate 18, and aspartate 109 each contribute to the a divalent metal cation site.

It belongs to the RNase HII family. The cofactor is Mn(2+). Mg(2+) serves as cofactor.

The protein resides in the cytoplasm. The catalysed reaction is Endonucleolytic cleavage to 5'-phosphomonoester.. Its function is as follows. Endonuclease that specifically degrades the RNA of RNA-DNA hybrids. The polypeptide is Ribonuclease HII (Haemophilus ducreyi (strain 35000HP / ATCC 700724)).